We begin with the raw amino-acid sequence, 367 residues long: Probable cinnamyl alcohol dehydrogenase (367 aa).

C47 contacts Zn(2+). An NADP(+)-binding site is contributed by T49. Positions 69, 70, 100, 103, 106, 114, and 163 each coordinate Zn(2+). Residues T167, 188–193 (GLGGVG), 211–216 (SSSSKK), T251, G275, and 298–300 (SFI) each bind NADP(+).

This sequence belongs to the zinc-containing alcohol dehydrogenase family. Homodimer. Zn(2+) is required as a cofactor.

It carries out the reaction (E)-cinnamyl alcohol + NADP(+) = (E)-cinnamaldehyde + NADPH + H(+). The catalysed reaction is (E)-coniferol + NADP(+) = (E)-coniferaldehyde + NADPH + H(+). It catalyses the reaction (E)-sinapyl alcohol + NADP(+) = (E)-sinapaldehyde + NADPH + H(+). The enzyme catalyses (E)-4-coumaroyl alcohol + NADP(+) = (E)-4-coumaraldehyde + NADPH + H(+). It carries out the reaction (E)-caffeyl alcohol + NADP(+) = (E)-caffeyl aldehyde + NADPH + H(+). The protein operates within aromatic compound metabolism; phenylpropanoid biosynthesis. Involved in lignin biosynthesis. May catalyze the final step specific for the production of lignin monomers, like coniferyl alcohol, sinapyl alcohol and 4-coumaryl alcohol. The protein is Probable cinnamyl alcohol dehydrogenase of Zea mays (Maize).